We begin with the raw amino-acid sequence, 274 residues long: tRNA-cytidine(32) 2-sulfurtransferase (274 aa).

Residues 40 to 45 (SGGKDS) carry the PP-loop motif motif. [4Fe-4S] cluster-binding residues include Cys115, Cys118, and Cys206.

The protein belongs to the TtcA family. In terms of assembly, homodimer. It depends on Mg(2+) as a cofactor. [4Fe-4S] cluster serves as cofactor.

The protein resides in the cytoplasm. The enzyme catalyses cytidine(32) in tRNA + S-sulfanyl-L-cysteinyl-[cysteine desulfurase] + AH2 + ATP = 2-thiocytidine(32) in tRNA + L-cysteinyl-[cysteine desulfurase] + A + AMP + diphosphate + H(+). The protein operates within tRNA modification. Catalyzes the ATP-dependent 2-thiolation of cytidine in position 32 of tRNA, to form 2-thiocytidine (s(2)C32). The sulfur atoms are provided by the cysteine/cysteine desulfurase (IscS) system. This Ectopseudomonas mendocina (strain ymp) (Pseudomonas mendocina) protein is tRNA-cytidine(32) 2-sulfurtransferase.